The primary structure comprises 398 residues: Putative F-box/kelch-repeat protein At2g29780 (398 aa).

Residues 1–46 (MAIISETSDDGSHGGVPNKKPEELHKNPKEDDHQEEEVENHPPIPR) form a disordered region. The segment covering 19 to 32 (KKPEELHKNPKEDD) has biased composition (basic and acidic residues). The 48-residue stretch at 43–90 (PIPRQIPQALIRRTVALIKRCHYPSLSLLSKAFRIVISSPELHQTRSS) folds into the F-box domain. Kelch repeat units follow at residues 148 to 195 (KMYV…VING), 196 to 241 (KIYV…GFVT), 243 to 289 (VVMQ…VIED), and 295 to 342 (DPYC…GGKL).

The polypeptide is Putative F-box/kelch-repeat protein At2g29780 (Arabidopsis thaliana (Mouse-ear cress)).